The primary structure comprises 194 residues: Lytic chitin monooxygenase (194 aa).

The signal sequence occupies residues 1-28 (MKKSLLTIVLAFSFVLGGAALAPTVSEA). 2 residues coordinate Cu cation: His-29 and His-114. A Chitin-binding type-4 domain is found at 29-191 (HGYVASPGSR…VNAFYQAIDV (163 aa)).

The cofactor is Cu(2+).

It is found in the secreted. The catalysed reaction is [(1-&gt;4)-N-acetyl-beta-D-glucosaminyl]n+m + reduced acceptor + O2 = [(1-&gt;4)-N-acetyl-beta-D-glucosaminyl]m-1-(1-&gt;4)-2-(acetylamino)-2-deoxy-D-glucono-1,5-lactone + [(1-&gt;4)-N-acetyl-beta-D-glucosaminyl]n + acceptor + H2O.. It participates in glycan degradation; chitin degradation. Functionally, involved in chitin degradation. Catalyzes the oxidative cleavage of glycosidic bonds in both alpha- and beta-chitin via a copper-dependent mechanism, leading to oxidized chitooligosaccharides with a dominance of even-numbered products. Acts synergistically with the chitinase EfChi18A, and combining the two enzymes leads to rapid and complete depolymerization of crystalline chitin, especially with beta-chitin as a substrate. Is likely involved in a chitin degradation pathway that allows E.faecalis V583 to grow on chitin as a carbon source. The sequence is that of Lytic chitin monooxygenase from Enterococcus faecalis (strain ATCC 700802 / V583).